Reading from the N-terminus, the 391-residue chain is Oocyte zinc finger protein XlCOF7.2 (391 aa).

C2H2-type zinc fingers lie at residues 284–306, 312–334, 340–362, and 368–391; these read FPCS…YRTH, YPCS…RRIH, SSCS…HRTH, and YSCS…RRTH.

It belongs to the krueppel C2H2-type zinc-finger protein family.

The protein localises to the nucleus. May be involved in transcriptional regulation. This is Oocyte zinc finger protein XlCOF7.2 from Xenopus laevis (African clawed frog).